The primary structure comprises 370 residues: Dual-specificity RNA methyltransferase RlmN (370 aa).

E93 functions as the Proton acceptor in the catalytic mechanism. A Radical SAM core domain is found at E99–D337. A disulfide bond links C106 and C343. C113, C117, and C120 together coordinate [4Fe-4S] cluster. S-adenosyl-L-methionine is bound by residues G167 to E168, S199, S221 to H223, and N300. C343 functions as the S-methylcysteine intermediate in the catalytic mechanism.

Belongs to the radical SAM superfamily. RlmN family. Requires [4Fe-4S] cluster as cofactor.

It is found in the cytoplasm. It catalyses the reaction adenosine(2503) in 23S rRNA + 2 reduced [2Fe-2S]-[ferredoxin] + 2 S-adenosyl-L-methionine = 2-methyladenosine(2503) in 23S rRNA + 5'-deoxyadenosine + L-methionine + 2 oxidized [2Fe-2S]-[ferredoxin] + S-adenosyl-L-homocysteine. The enzyme catalyses adenosine(37) in tRNA + 2 reduced [2Fe-2S]-[ferredoxin] + 2 S-adenosyl-L-methionine = 2-methyladenosine(37) in tRNA + 5'-deoxyadenosine + L-methionine + 2 oxidized [2Fe-2S]-[ferredoxin] + S-adenosyl-L-homocysteine. Specifically methylates position 2 of adenine 2503 in 23S rRNA and position 2 of adenine 37 in tRNAs. m2A2503 modification seems to play a crucial role in the proofreading step occurring at the peptidyl transferase center and thus would serve to optimize ribosomal fidelity. The chain is Dual-specificity RNA methyltransferase RlmN from Francisella tularensis subsp. holarctica (strain FTNF002-00 / FTA).